Here is a 161-residue protein sequence, read N- to C-terminus: Phosphopantetheine adenylyltransferase (161 aa).

Thr9 contacts substrate. ATP is bound by residues 9-10 and His17; that span reads TF. 3 residues coordinate substrate: Lys41, Leu73, and Arg87. ATP is bound by residues 88-90, Glu98, and 123-129; these read GLR and YQFISGT.

The protein belongs to the bacterial CoaD family. As to quaternary structure, homohexamer. Requires Mg(2+) as cofactor.

It localises to the cytoplasm. It catalyses the reaction (R)-4'-phosphopantetheine + ATP + H(+) = 3'-dephospho-CoA + diphosphate. Its pathway is cofactor biosynthesis; coenzyme A biosynthesis; CoA from (R)-pantothenate: step 4/5. Reversibly transfers an adenylyl group from ATP to 4'-phosphopantetheine, yielding dephospho-CoA (dPCoA) and pyrophosphate. This Cupriavidus necator (strain ATCC 17699 / DSM 428 / KCTC 22496 / NCIMB 10442 / H16 / Stanier 337) (Ralstonia eutropha) protein is Phosphopantetheine adenylyltransferase.